Here is a 492-residue protein sequence, read N- to C-terminus: Ketol-acid reductoisomerase (NADP(+)) (492 aa).

In terms of domain architecture, KARI N-terminal Rossmann spans 15 to 208 (AQLGKCRFMA…GGHRAGVLEF (194 aa)). Residues 45-48 (CGAQ), Arg-68, Arg-76, Ser-78, and 108-110 (DKQ) contribute to the NADP(+) site. Residue His-132 is part of the active site. Residue Gly-158 participates in NADP(+) binding. KARI C-terminal knotted domains are found at residues 209–344 (SFVA…NAPQ) and 345–485 (FEGK…MTDM). Positions 217, 221, 389, and 393 each coordinate Mg(2+). A substrate-binding site is contributed by Ser-414.

Belongs to the ketol-acid reductoisomerase family. It depends on Mg(2+) as a cofactor.

It carries out the reaction (2R)-2,3-dihydroxy-3-methylbutanoate + NADP(+) = (2S)-2-acetolactate + NADPH + H(+). It catalyses the reaction (2R,3R)-2,3-dihydroxy-3-methylpentanoate + NADP(+) = (S)-2-ethyl-2-hydroxy-3-oxobutanoate + NADPH + H(+). The protein operates within amino-acid biosynthesis; L-isoleucine biosynthesis; L-isoleucine from 2-oxobutanoate: step 2/4. It functions in the pathway amino-acid biosynthesis; L-valine biosynthesis; L-valine from pyruvate: step 2/4. Involved in the biosynthesis of branched-chain amino acids (BCAA). Catalyzes an alkyl-migration followed by a ketol-acid reduction of (S)-2-acetolactate (S2AL) to yield (R)-2,3-dihydroxy-isovalerate. In the isomerase reaction, S2AL is rearranged via a Mg-dependent methyl migration to produce 3-hydroxy-3-methyl-2-ketobutyrate (HMKB). In the reductase reaction, this 2-ketoacid undergoes a metal-dependent reduction by NADPH to yield (R)-2,3-dihydroxy-isovalerate. This is Ketol-acid reductoisomerase (NADP(+)) from Yersinia pestis bv. Antiqua (strain Antiqua).